The primary structure comprises 359 residues: Stearoyl-CoA desaturase (359 aa).

The Cytoplasmic portion of the chain corresponds to M1 to V72. The helical transmembrane segment at W73–I93 threads the bilayer. N75 is a substrate binding site. Topologically, residues P94–K97 are lumenal. A helical transmembrane segment spans residues I98 to G118. At A119 to Y217 the chain is on the cytoplasmic side. Positions 120 and 125 each coordinate Fe cation. A Histidine box-1 motif is present at residues H120–H125. Positions 148, 155, and 156 each coordinate substrate. Fe cation is bound by residues H157, H160, and H161. The Histidine box-2 signature appears at H157 to H161. Substrate-binding residues include R188 and K189. Phosphoserine is present on residues S198 and S203. Residues Y218–L237 traverse the membrane as a helical segment. Topologically, residues W238–T241 are lumenal. A helical transmembrane segment spans residues F242–L263. Residue W262 participates in substrate binding. The Cytoplasmic segment spans residues V264–G359. 4 residues coordinate Fe cation: H269, H298, H301, and H302. A Histidine box-3 motif is present at residues H298–H302.

The protein belongs to the fatty acid desaturase type 1 family. The cofactor is Fe(2+).

It localises to the endoplasmic reticulum membrane. It carries out the reaction octadecanoyl-CoA + 2 Fe(II)-[cytochrome b5] + O2 + 2 H(+) = (9Z)-octadecenoyl-CoA + 2 Fe(III)-[cytochrome b5] + 2 H2O. It catalyses the reaction hexadecanoyl-CoA + 2 Fe(II)-[cytochrome b5] + O2 + 2 H(+) = (9Z)-hexadecenoyl-CoA + 2 Fe(III)-[cytochrome b5] + 2 H2O. Stearoyl-CoA desaturase that utilizes O(2) and electrons from reduced cytochrome b5 to introduce the first double bond into saturated fatty acyl-CoA substrates. Catalyzes the insertion of a cis double bond at the delta-9 position into fatty acyl-CoA substrates including palmitoyl-CoA and stearoyl-CoA. Gives rise to a mixture of 16:1 and 18:1 unsaturated fatty acids. Plays an important role in lipid biosynthesis. Plays an important role in regulating the expression of genes that are involved in lipogenesis and in regulating mitochondrial fatty acid oxidation. Plays an important role in body energy homeostasis. Contributes to the biosynthesis of membrane phospholipids, cholesterol esters and triglycerides. The polypeptide is Stearoyl-CoA desaturase (SCD) (Bos taurus (Bovine)).